The sequence spans 199 residues: Recombination protein RecR (199 aa).

The segment at 57 to 72 adopts a C4-type zinc-finger fold; that stretch reads CQSCRTYTEETLCPIC. Residues 81–176 form the Toprim domain; it reads STICVVETPA…MISRIAHGVP (96 aa).

The protein belongs to the RecR family.

May play a role in DNA repair. It seems to be involved in an RecBC-independent recombinational process of DNA repair. It may act with RecF and RecO. This chain is Recombination protein RecR, found in Shewanella putrefaciens (strain CN-32 / ATCC BAA-453).